The sequence spans 527 residues: Putative ABC transporter peptide-binding protein BMEII0859 (527 aa).

The signal sequence occupies residues 1–23; the sequence is MRLRNFYSALALSAAVFAGPLYA.

Belongs to the bacterial solute-binding protein 5 family. As to quaternary structure, the complex is composed of two ATP-binding proteins (BMEII0863 and BMEII0864), two transmembrane proteins (BMEII0860 and BMEII0861) and a solute-binding protein (BMEII0859).

The protein localises to the periplasm. Its function is as follows. Probably part of an ABC transporter complex that could be involved in peptide import. In Brucella melitensis biotype 1 (strain ATCC 23456 / CCUG 17765 / NCTC 10094 / 16M), this protein is Putative ABC transporter peptide-binding protein BMEII0859.